Reading from the N-terminus, the 169-residue chain is UPF0065 protein in clcB-clcD intergenic region (169 aa).

Belongs to the UPF0065 (bug) family.

Its subcellular location is the periplasm. This is UPF0065 protein in clcB-clcD intergenic region from Pseudomonas knackmussii (strain DSM 6978 / CCUG 54928 / LMG 23759 / B13).